A 382-amino-acid chain; its full sequence is Chaperone protein DnaJ (382 aa).

The J domain occupies 5-70; that stretch reads DYYEVLGVSR…DKKAAYDRYG (66 aa). The CR-type zinc-finger motif lies at 141 to 219; sequence GVQKTINVPA…CHGAGRVEKE (79 aa). Zn(2+)-binding residues include Cys-154, Cys-157, Cys-171, Cys-174, Cys-193, Cys-196, Cys-207, and Cys-210. CXXCXGXG motif repeat units follow at residues 154 to 161, 171 to 178, 193 to 200, and 207 to 214; these read CDACKGTG, CPTCSGMG, CPTCNGMG, and CKVCHGAG.

This sequence belongs to the DnaJ family. Homodimer. Zn(2+) is required as a cofactor.

It localises to the cytoplasm. In terms of biological role, participates actively in the response to hyperosmotic and heat shock by preventing the aggregation of stress-denatured proteins and by disaggregating proteins, also in an autonomous, DnaK-independent fashion. Unfolded proteins bind initially to DnaJ; upon interaction with the DnaJ-bound protein, DnaK hydrolyzes its bound ATP, resulting in the formation of a stable complex. GrpE releases ADP from DnaK; ATP binding to DnaK triggers the release of the substrate protein, thus completing the reaction cycle. Several rounds of ATP-dependent interactions between DnaJ, DnaK and GrpE are required for fully efficient folding. Also involved, together with DnaK and GrpE, in the DNA replication of plasmids through activation of initiation proteins. This chain is Chaperone protein DnaJ, found in Cereibacter sphaeroides (strain ATCC 17023 / DSM 158 / JCM 6121 / CCUG 31486 / LMG 2827 / NBRC 12203 / NCIMB 8253 / ATH 2.4.1.) (Rhodobacter sphaeroides).